The chain runs to 545 residues: CTP synthase (545 aa).

Residues 1–265 (MSKYIFVTGG…LVPIAKQLDL (265 aa)) are amidoligase domain. Ser13 serves as a coordination point for CTP. Residue Ser13 coordinates UTP. ATP-binding positions include 14–19 (SLGKGI) and Asp71. Positions 71 and 139 each coordinate Mg(2+). CTP contacts are provided by residues 146–148 (DIE), 186–191 (KTKPTQ), and Lys222. UTP-binding positions include 186 to 191 (KTKPTQ) and Lys222. The Glutamine amidotransferase type-1 domain occupies 290-544 (KIAFVGKYLQ…VENAYKCQRS (255 aa)). Gly355 provides a ligand contact to L-glutamine. Cys382 serves as the catalytic Nucleophile; for glutamine hydrolysis. L-glutamine is bound by residues 383–386 (LGMQ), Glu406, and Arg473. Active-site residues include His517 and Glu519.

Belongs to the CTP synthase family. As to quaternary structure, homotetramer.

The enzyme catalyses UTP + L-glutamine + ATP + H2O = CTP + L-glutamate + ADP + phosphate + 2 H(+). It carries out the reaction L-glutamine + H2O = L-glutamate + NH4(+). It catalyses the reaction UTP + NH4(+) + ATP = CTP + ADP + phosphate + 2 H(+). It functions in the pathway pyrimidine metabolism; CTP biosynthesis via de novo pathway; CTP from UDP: step 2/2. Its activity is regulated as follows. Allosterically activated by GTP, when glutamine is the substrate; GTP has no effect on the reaction when ammonia is the substrate. The allosteric effector GTP functions by stabilizing the protein conformation that binds the tetrahedral intermediate(s) formed during glutamine hydrolysis. Inhibited by the product CTP, via allosteric rather than competitive inhibition. Catalyzes the ATP-dependent amination of UTP to CTP with either L-glutamine or ammonia as the source of nitrogen. Regulates intracellular CTP levels through interactions with the four ribonucleotide triphosphates. This chain is CTP synthase, found in Nautilia profundicola (strain ATCC BAA-1463 / DSM 18972 / AmH).